The primary structure comprises 383 residues: Na(+)/H(+) antiporter NhaA (383 aa).

11 helical membrane passes run 19–39 (AGGV…NSPL), 56–76 (VLHG…GLEI), 92–112 (ILPG…FLAL), 122–142 (GWAV…ALLG), 151–171 (IFLT…IALF), 174–194 (AKLS…LAAL), 212–232 (LWGA…ALAL), 255–275 (VGYG…FAGL), 292–312 (LLFG…WLGF), 326–346 (GVAV…ALAF), and 356–376 (VKVG…LVLL).

Belongs to the NhaA Na(+)/H(+) (TC 2.A.33) antiporter family.

The protein resides in the cell inner membrane. The catalysed reaction is Na(+)(in) + 2 H(+)(out) = Na(+)(out) + 2 H(+)(in). Its function is as follows. Na(+)/H(+) antiporter that extrudes sodium in exchange for external protons. The protein is Na(+)/H(+) antiporter NhaA of Paramagnetospirillum magneticum (strain ATCC 700264 / AMB-1) (Magnetospirillum magneticum).